Here is a 101-residue protein sequence, read N- to C-terminus: Small ribosomal subunit protein uS14A (101 aa).

The tract at residues 35 to 56 (TSSYEQRLDAQRALSRQPRDAS) is disordered.

The protein belongs to the universal ribosomal protein uS14 family. Part of the 30S ribosomal subunit. Contacts proteins S3 and S10.

In terms of biological role, binds 16S rRNA, required for the assembly of 30S particles and may also be responsible for determining the conformation of the 16S rRNA at the A site. The polypeptide is Small ribosomal subunit protein uS14A (Mycobacterium marinum (strain ATCC BAA-535 / M)).